The primary structure comprises 109 residues: Phosphoribosyl-AMP cyclohydrolase (109 aa).

Mg(2+) is bound at residue Asp-80. Cys-81 provides a ligand contact to Zn(2+). Asp-82 and Asp-84 together coordinate Mg(2+). Residues Cys-97 and Cys-104 each contribute to the Zn(2+) site.

The protein belongs to the PRA-CH family. As to quaternary structure, homodimer. The cofactor is Mg(2+). Zn(2+) serves as cofactor.

It localises to the cytoplasm. It catalyses the reaction 1-(5-phospho-beta-D-ribosyl)-5'-AMP + H2O = 1-(5-phospho-beta-D-ribosyl)-5-[(5-phospho-beta-D-ribosylamino)methylideneamino]imidazole-4-carboxamide. Its pathway is amino-acid biosynthesis; L-histidine biosynthesis; L-histidine from 5-phospho-alpha-D-ribose 1-diphosphate: step 3/9. Functionally, catalyzes the hydrolysis of the adenine ring of phosphoribosyl-AMP. This is Phosphoribosyl-AMP cyclohydrolase from Clostridium beijerinckii (strain ATCC 51743 / NCIMB 8052) (Clostridium acetobutylicum).